A 580-amino-acid polypeptide reads, in one-letter code: MEVPQPEPAPGSALSPAGVCGGAQRPGHLPGLLLGSHGLLGSPVRAAASSPVTTLTQTMHDLAGLGSETPKSQVGTLLFRSRSRLTHLSLSRRASESSLSSESSESSDAGLCMDSPSPMDPHMAEQTFEQAIQAASRIIRNEQFAIRRFQSMPVRLLGHSPVLRNITNSQAPDGRRKSEAGSGAASSSGEDKENDGFVFKMPWKPTHPSSTHALAEWASRREAFAQRPSSAPDLMCLSPDRKMEVEELSPLALGRFSLTPAEGDTEEDDGFVDILESDLKDDDAVPPGMESLISAPLVKTLEKEEEKDLVMYSKCQRLFRSPSMPCSVIRPILKRLERPQDRDTPVQNKRRRSVTPPEEQQEAEEPKARVLRSKSLCHDEIENLLDSDHRELIGDYSKAFLLQTVDGKHQDLKYISPETMVALLTGKFSNIVDKFVIVDCRYPYEYEGGHIKTAVNLPLERDAESFLLKSPIAPCSLDKRVILIFHCEFSSERGPRMCRFIRERDRAVNDYPSLYYPEMYILKGGYKEFFPQHPNFCEPQDYRPMNHEAFKDELKTFRLKTRSWAGERSRRELCSRLQDQ.

Positions 1-24 are disordered; sequence MEVPQPEPAPGSALSPAGVCGGAQ. Phosphoserine is present on serine 42. Residues 89–107 show a composition bias toward low complexity; it reads SLSRRASESSLSSESSESS. Disordered stretches follow at residues 89-117 and 165-196; these read SLSR…DSPS and NITN…ENDG. Serine 169 carries the phosphoserine; by MELK modification. Serine 249 bears the Phosphoserine mark. At serine 323 the chain carries Phosphoserine; by MELK and MAPK14. Residues 331–370 form a disordered region; sequence PILKRLERPQDRDTPVQNKRRRSVTPPEEQQEAEEPKARV. Over residues 334–344 the composition is skewed to basic and acidic residues; the sequence is KRLERPQDRDT. Position 353 is a phosphoserine; by AURKA (serine 353). The residue at position 375 (serine 375) is a Phosphoserine; by BRSK1 and MAPK14. Residues 431-538 enclose the Rhodanese domain; that stretch reads IVDKFVIVDC…FFPQHPNFCE (108 aa). Position 470 is a phosphoserine (serine 470). Cysteine 487 is a catalytic residue. Phosphoserine is present on serine 563.

The protein belongs to the MPI phosphatase family. As to quaternary structure, interacts with MAPK14 and 14-3-3 proteins. In terms of processing, phosphorylated by BRSK1 in vitro. Phosphorylated by CHEK1, which inhibits the activity of this protein. Phosphorylation at Ser-353 by AURKA might locally participate in the control of the onset of mitosis. Phosphorylation by MELK at Ser-169 promotes localization to the centrosome and the spindle poles during mitosis. Phosphorylation at Ser-323 and Ser-375 by MAPK14 is required for binding to 14-3-3 proteins.

It localises to the cytoplasm. The protein resides in the cytoskeleton. It is found in the microtubule organizing center. Its subcellular location is the centrosome. The protein localises to the spindle pole. It carries out the reaction O-phospho-L-tyrosyl-[protein] + H2O = L-tyrosyl-[protein] + phosphate. With respect to regulation, stimulated by B-type cyclins. Its function is as follows. Tyrosine protein phosphatase which functions as a dosage-dependent inducer of mitotic progression. Directly dephosphorylates CDK1 and stimulates its kinase activity. Required for G2/M phases of the cell cycle progression and abscission during cytokinesis in a ECT2-dependent manner. The three isoforms seem to have a different level of activity. This chain is M-phase inducer phosphatase 2 (CDC25B), found in Homo sapiens (Human).